The chain runs to 309 residues: MNILLANPRGFCAGVDRAISIVERALELFSPPIYVRHEVVHNRYVVQNLKERGAVFVEELDQVPDDSIVIFSAHGVSQAVRAEAKRRGLKVFDATCPLVTKVHLQVARASRKGIECILIGHAGHPEVEGTMGQYDNSAGGVHLVESPEDVAKLVVKDPDNLCFVTQTTLSMDDTADVISSLQKKYPSIEGPRKDDICYATQNRQDAVRNVAEEVELFIVVGSKNSSNSNRLRELAQKKGTQAFLVDNADDVDATWFNGVERVAVTAGASAPEVLVKQVVDAIAKMAPSVVTEVEGQLEDTVFAVPAELR.

Residue Cys-12 coordinates [4Fe-4S] cluster. Positions 41 and 74 each coordinate (2E)-4-hydroxy-3-methylbut-2-enyl diphosphate. Residues His-41 and His-74 each coordinate dimethylallyl diphosphate. Positions 41 and 74 each coordinate isopentenyl diphosphate. Cys-96 lines the [4Fe-4S] cluster pocket. His-124 lines the (2E)-4-hydroxy-3-methylbut-2-enyl diphosphate pocket. His-124 is a binding site for dimethylallyl diphosphate. His-124 contacts isopentenyl diphosphate. Residue Glu-126 is the Proton donor of the active site. Residue Thr-167 coordinates (2E)-4-hydroxy-3-methylbut-2-enyl diphosphate. Cys-197 provides a ligand contact to [4Fe-4S] cluster. Ser-225, Ser-226, Asn-227, and Ser-269 together coordinate (2E)-4-hydroxy-3-methylbut-2-enyl diphosphate. Positions 225, 226, 227, and 269 each coordinate dimethylallyl diphosphate. The isopentenyl diphosphate site is built by Ser-225, Ser-226, Asn-227, and Ser-269.

It belongs to the IspH family. It depends on [4Fe-4S] cluster as a cofactor.

It carries out the reaction isopentenyl diphosphate + 2 oxidized [2Fe-2S]-[ferredoxin] + H2O = (2E)-4-hydroxy-3-methylbut-2-enyl diphosphate + 2 reduced [2Fe-2S]-[ferredoxin] + 2 H(+). It catalyses the reaction dimethylallyl diphosphate + 2 oxidized [2Fe-2S]-[ferredoxin] + H2O = (2E)-4-hydroxy-3-methylbut-2-enyl diphosphate + 2 reduced [2Fe-2S]-[ferredoxin] + 2 H(+). The protein operates within isoprenoid biosynthesis; dimethylallyl diphosphate biosynthesis; dimethylallyl diphosphate from (2E)-4-hydroxy-3-methylbutenyl diphosphate: step 1/1. It participates in isoprenoid biosynthesis; isopentenyl diphosphate biosynthesis via DXP pathway; isopentenyl diphosphate from 1-deoxy-D-xylulose 5-phosphate: step 6/6. Catalyzes the conversion of 1-hydroxy-2-methyl-2-(E)-butenyl 4-diphosphate (HMBPP) into a mixture of isopentenyl diphosphate (IPP) and dimethylallyl diphosphate (DMAPP). Acts in the terminal step of the DOXP/MEP pathway for isoprenoid precursor biosynthesis. The sequence is that of 4-hydroxy-3-methylbut-2-enyl diphosphate reductase from Shewanella pealeana (strain ATCC 700345 / ANG-SQ1).